A 692-amino-acid polypeptide reads, in one-letter code: Elongation factor G (692 aa).

Residues 8–282 enclose the tr-type G domain; sequence ENTRNIGIMA…AVIDYLPSPL (275 aa). Residues 17 to 24, 81 to 85, and 135 to 138 each bind GTP; these read AHIDAGKT, DTPGH, and NKMD.

It belongs to the TRAFAC class translation factor GTPase superfamily. Classic translation factor GTPase family. EF-G/EF-2 subfamily.

It localises to the cytoplasm. Its function is as follows. Catalyzes the GTP-dependent ribosomal translocation step during translation elongation. During this step, the ribosome changes from the pre-translocational (PRE) to the post-translocational (POST) state as the newly formed A-site-bound peptidyl-tRNA and P-site-bound deacylated tRNA move to the P and E sites, respectively. Catalyzes the coordinated movement of the two tRNA molecules, the mRNA and conformational changes in the ribosome. This is Elongation factor G from Bacillus cereus (strain G9842).